Reading from the N-terminus, the 31-residue chain is Cycloviolacin-O23 (31 aa).

The segment at residues 1-31 is a cross-link (cyclopeptide (Gly-Asn)); that stretch reads GLPTCGETCFGGTCNTPGCTCDSSWPICTHN. 3 cysteine pairs are disulfide-bonded: Cys-5/Cys-19, Cys-9/Cys-21, and Cys-14/Cys-28.

Post-translationally, this is a cyclic peptide. In terms of tissue distribution, expressed in leaves but not in petals, petioles, roots and runners (at protein level).

Probably participates in a plant defense mechanism. The protein is Cycloviolacin-O23 of Viola odorata (Sweet violet).